The chain runs to 426 residues: Glutamate-1-semialdehyde 2,1-aminomutase (426 aa).

At lysine 265 the chain carries N6-(pyridoxal phosphate)lysine.

This sequence belongs to the class-III pyridoxal-phosphate-dependent aminotransferase family. HemL subfamily. As to quaternary structure, homodimer. The cofactor is pyridoxal 5'-phosphate.

The protein resides in the cytoplasm. It catalyses the reaction (S)-4-amino-5-oxopentanoate = 5-aminolevulinate. It participates in porphyrin-containing compound metabolism; protoporphyrin-IX biosynthesis; 5-aminolevulinate from L-glutamyl-tRNA(Glu): step 2/2. The chain is Glutamate-1-semialdehyde 2,1-aminomutase from Shigella flexneri serotype 5b (strain 8401).